A 111-amino-acid polypeptide reads, in one-letter code: Ribonuclease P protein component (111 aa).

The protein belongs to the RnpA family. Consists of a catalytic RNA component (M1 or rnpB) and a protein subunit.

It carries out the reaction Endonucleolytic cleavage of RNA, removing 5'-extranucleotides from tRNA precursor.. Its function is as follows. RNaseP catalyzes the removal of the 5'-leader sequence from pre-tRNA to produce the mature 5'-terminus. It can also cleave other RNA substrates such as 4.5S RNA. The protein component plays an auxiliary but essential role in vivo by binding to the 5'-leader sequence and broadening the substrate specificity of the ribozyme. This is Ribonuclease P protein component from Fusobacterium nucleatum subsp. nucleatum (strain ATCC 25586 / DSM 15643 / BCRC 10681 / CIP 101130 / JCM 8532 / KCTC 2640 / LMG 13131 / VPI 4355).